The following is a 359-amino-acid chain: MKTLTVHTPSHSYPIFIGNGLLPQAGSLLKPHLGKRAAIITNETVAPLYLGTLQTALDAAGVSHFSIILPDGEAHKNWQTLNLIFDGLMQNRAERKTTLIALGGGVIGDMTGFAAATYQRGAPFVQIPTTLLSQVDSSVGGKTAINHPLGKNMIGAFYQPQAVLADLDTLHTLPARELSAGMAEVIKYGTLGDISFFEWLEQHMPELMALERAPLIQAVYRCCQMKADIVAQDETEQGIRAWLNLGHTFGHAIETEMGYGTWLHGEAVAAGCVLAARLSEQLGKISAADTARLAALLEAAGLPSAPPVFAFEKWLEHMSHDKKVSSGVMRFIGLNRLGEAVITEITDTDILRRTLQPYL.

Residues 71–76, 105–109, 129–130, lysine 142, lysine 151, and 169–172 each bind NAD(+); these read DGEAHK, GVIGD, TT, and TLHT. Residues glutamate 184, histidine 247, and histidine 264 each contribute to the Zn(2+) site.

Belongs to the sugar phosphate cyclases superfamily. Dehydroquinate synthase family. Co(2+) is required as a cofactor. Zn(2+) serves as cofactor. Requires NAD(+) as cofactor.

The protein resides in the cytoplasm. It carries out the reaction 7-phospho-2-dehydro-3-deoxy-D-arabino-heptonate = 3-dehydroquinate + phosphate. Its pathway is metabolic intermediate biosynthesis; chorismate biosynthesis; chorismate from D-erythrose 4-phosphate and phosphoenolpyruvate: step 2/7. In terms of biological role, catalyzes the conversion of 3-deoxy-D-arabino-heptulosonate 7-phosphate (DAHP) to dehydroquinate (DHQ). The chain is 3-dehydroquinate synthase from Neisseria meningitidis serogroup C (strain 053442).